Reading from the N-terminus, the 265-residue chain is Small ribosomal subunit protein uS3 (265 aa).

Positions 39–107 constitute a KH type-2 domain; it reads VRDFLKKKLK…PVHVNIEEIR (69 aa). The tract at residues 211–265 is disordered; it reads NDAPVVEEPQDDRRRRPGRPEGRRREGEGRPGGNRRGGAGAGRRAAPGADAKSGE. Basic and acidic residues predominate over residues 221 to 239; the sequence is DDRRRRPGRPEGRRREGEG. Over residues 240–251 the composition is skewed to gly residues; the sequence is RPGGNRRGGAGA.

Belongs to the universal ribosomal protein uS3 family. As to quaternary structure, part of the 30S ribosomal subunit. Forms a tight complex with proteins S10 and S14.

In terms of biological role, binds the lower part of the 30S subunit head. Binds mRNA in the 70S ribosome, positioning it for translation. This chain is Small ribosomal subunit protein uS3, found in Cupriavidus necator (strain ATCC 17699 / DSM 428 / KCTC 22496 / NCIMB 10442 / H16 / Stanier 337) (Ralstonia eutropha).